Consider the following 190-residue polypeptide: MPIDFLQPADIVAPQLLGCIFTHDGVSIRLTEVEAYLGAEDAAAHTHRGKTARNAAMFGPGGHMYIYISYGIHRAGNIACAPEGVGQGVLLRAGEVVAGEDIAYRRRGDVPFTRLAQGPGNLGQALNFQLSDNHAPINGTDFQLMEPSERPEWVSGPRVGITKNADAPLRFWIPGDPTVSVRRGRPKTRK.

It belongs to the DNA glycosylase MPG family.

The sequence is that of Putative 3-methyladenine DNA glycosylase from Corynebacterium efficiens (strain DSM 44549 / YS-314 / AJ 12310 / JCM 11189 / NBRC 100395).